The primary structure comprises 73 residues: Dipeptidyl peptidase 3 (73 aa).

This sequence belongs to the peptidase M49 family. Requires Zn(2+) as cofactor.

It is found in the membrane. It carries out the reaction Release of an N-terminal dipeptide from a peptide comprising four or more residues, with broad specificity. Also acts on dipeptidyl 2-naphthylamides.. In terms of biological role, degrades neuropeptide proctolin (RYLPT) by cleavage between Tyr and Leu residues. The chain is Dipeptidyl peptidase 3 from Blaberus craniifer (Death's head cockroach).